Reading from the N-terminus, the 99-residue chain is Cell division protein FtsB (99 aa).

Topologically, residues 1 to 3 (MKF) are cytoplasmic. A helical membrane pass occupies residues 4–21 (FVIALIVLLGLLQYRLWS). Residues 22–99 (GDNSLPEYFV…GDRSVSSPSQ (78 aa)) are Periplasmic-facing. Positions 31-73 (VLQKQIAAQQDGNAKLNERNQVLKEEIIDLKSGTEAIEERARN) form a coiled coil.

Belongs to the FtsB family. As to quaternary structure, part of a complex composed of FtsB, FtsL and FtsQ.

Its subcellular location is the cell inner membrane. Its function is as follows. Essential cell division protein. May link together the upstream cell division proteins, which are predominantly cytoplasmic, with the downstream cell division proteins, which are predominantly periplasmic. The protein is Cell division protein FtsB of Shewanella sp. (strain MR-4).